Reading from the N-terminus, the 380-residue chain is Alanine racemase (380 aa).

Residue lysine 34 is the Proton acceptor; specific for D-alanine of the active site. Residue lysine 34 is modified to N6-(pyridoxal phosphate)lysine. Arginine 135 lines the substrate pocket. Tyrosine 267 (proton acceptor; specific for L-alanine) is an active-site residue. Methionine 315 lines the substrate pocket.

This sequence belongs to the alanine racemase family. The cofactor is pyridoxal 5'-phosphate.

It carries out the reaction L-alanine = D-alanine. It participates in amino-acid biosynthesis; D-alanine biosynthesis; D-alanine from L-alanine: step 1/1. In terms of biological role, catalyzes the interconversion of L-alanine and D-alanine. May also act on other amino acids. The polypeptide is Alanine racemase (alr) (Lawsonia intracellularis (strain PHE/MN1-00)).